Reading from the N-terminus, the 825-residue chain is MAAGKFASLPRNMPVNHQFPLASSMDLLSSRSPLAEHRPDAYQDVSIHGTLPRKKKGPPPIRSCDDFSHMGTLPHSKSPRQNSPVTQDGIQESPWQDRHGETFTFRDPHLLDPTVEYVKFSKERHIMDRTPEKLKKELEEELLLSSEDLRSHAWYHGRIPRQVSENLVQRDGDFLVRDSLSSPGNFVLTCQWKNLAQHFKINRTVLRLSEAYSRVQYQFEMESFDSIPGLVRCYVGNRRPISQQSGAIIFQPINRTVPLRCLEEHYGTSPGQAREGSLTKGRPDVAKRLSLTMGGVQAREQNLPRGNLLRNKEKSGSQPACLDHMQDRRALSLKAHQSESYLPIGCKLPPQSSGVDTSPCPNSPVFRTGSEPALSPAVVRRVSSDARAGEALRGSDSQLCPKPPPKPCKVPFLKVPSSPSAWLNSEANYCELNPAFATGCGRGAKLPSCAQGSHTELLTAKQNEAPGPRNSGVNYLILDDDDRERPWEPAAAQMEKGQWDKGEFVTPLLETVSSFRPNEFESKFLPPENKPLETAMLKRAKELFTNNDPKVIAQHVLSMDCRVARILGVSEEMRRNMGVSSGLELITLPHGHQLRLDIIERHNTMAIGIAVDILGCTGTLEDRAATLSKIIQVAVELKDSMGDLYSFSALMKALEMPQITRLEKTWTALRHQYTQTAILYEKQLKPFSKLLHEGRESTCVPPNNVSVPLLMPLVTLMERQAVTFEGTDMWEKNDQSCEIMLNHLATARFMAEAADSYRMNAERILAGFQPDEEMNEICKTEFQMRLLWGSKGAQVNQTERYEKFNQILTALSRKLEPPPVKQAEL.

Alanine 2 carries the post-translational modification N-acetylalanine. Phosphoserine occurs at positions 32, 78, and 83. The segment at 40–106 (DAYQDVSIHG…DRHGETFTFR (67 aa)) is disordered. A compositionally biased stretch (polar residues) spans 79–94 (PRQNSPVTQDGIQESP). Positions 95 to 106 (WQDRHGETFTFR) are enriched in basic and acidic residues. One can recognise an SH2 domain in the interval 154-253 (WYHGRIPRQV…QSGAIIFQPI (100 aa)). Residues serine 182 and serine 290 each carry the phosphoserine modification. The residue at position 334 (lysine 334) is an N6-methyllysine. A phosphoserine mark is found at serine 358, serine 363, and serine 375. Arginine 442 bears the Omega-N-methylarginine mark. Serine 471 carries the phosphoserine modification. Residues 548 to 818 (DPKVIAQHVL…TALSRKLEPP (271 aa)) form the Ras-GEF domain. A mediates the interaction with BCAR1/p130CAS region spans residues 744–748 (LATAR).

Part of a complex comprised of PTPRA, BCAR1, BCAR3 (via SH2 domain) and SRC; the formation of the complex is dependent on integrin mediated-tyrosine phosphorylation of PTPRA. Within the complex, interacts (via SH2 domain) with PTPRA (when phosphorylated on 'Tyr-798'). Interacts (via Ras-GEF domain) with BCAR1. Interacts (via Ras-GEF domain) with NEDD9. Interacts with PTK2/FAK1. Interacts with PTPN1. Interacts (via SH2 domain) with EGFR (when tyrosine-phosphorylated). Post-translationally, phosphorylated on tyrosine residues. Ubiquitously expressed. Found in several cancer cell lines, but not in nonmalignant breast tissue.

The protein localises to the cytoplasm. Its subcellular location is the cell junction. It localises to the focal adhesion. Acts as an adapter protein downstream of several growth factor receptors to promote cell proliferation, migration, and redistribution of actin fibers. Specifically involved in INS/insulin signaling pathway by mediating MAPK1/ERK2-MAPK3/ERK1 activation and DNA synthesis. Promotes insulin-mediated membrane ruffling. In response to vasoconstrictor peptide EDN1, involved in the activation of RAP1 downstream of PTK2B via interaction with phosphorylated BCAR1. Inhibits cell migration and invasion via regulation of TGFB-mediated matrix digestion, actin filament rearrangement, and inhibition of invadopodia activity. May inhibit TGFB-SMAD signaling, via facilitating BCAR1 and SMAD2 and/or SMAD3 interaction. Regulates EGF-induced DNA synthesis. Required for the maintenance of ocular lens morphology and structural integrity, potentially via regulation of focal adhesion complex signaling. Acts upstream of PTPRA to regulate the localization of BCAR1 and PTPRA to focal adhesions, via regulation of SRC-mediated phosphorylation of PTPRA. Positively regulates integrin-induced tyrosine phosphorylation of BCAR1. Acts as a guanine nucleotide exchange factor (GEF) for small GTPases RALA, RAP1A and RRAS. However, in a contrasting study, lacks GEF activity towards RAP1. The protein is Breast cancer anti-estrogen resistance protein 3 (BCAR3) of Homo sapiens (Human).